We begin with the raw amino-acid sequence, 149 residues long: Stathmin (149 aa).

Ala-2 bears the N-acetylalanine mark. Ser-4 carries the phosphoserine modification. The SLD domain occupies 4–145 (SDIQVKELEK…NKESKDPADE (142 aa)). Lys-9 is subject to N6-acetyllysine. Ser-16 carries the post-translational modification Phosphoserine. Ser-25 is modified (phosphoserine; by CDK1, MAPK1 and MAPK3). The residue at position 29 (Lys-29) is an N6-methyllysine. Ser-31 is subject to Phosphoserine. At Ser-38 the chain carries Phosphoserine; by CDK1, MAPK1 and MAPK3. Positions 41-140 (KKKDLSLEEI…EEVRKNKESK (100 aa)) form a coiled coil. Ser-63 is modified (phosphoserine; by PKA). Residues Lys-100 and Lys-119 each carry the N6-acetyllysine modification. The span at 121–143 (ERLREKDKHIEEVRKNKESKDPA) shows a compositional bias: basic and acidic residues. The interval 121 to 149 (ERLREKDKHIEEVRKNKESKDPADETEAD) is disordered.

The protein belongs to the stathmin family. As to quaternary structure, binds to two alpha/beta-tubulin heterodimers. Interacts with KIST. In terms of processing, many different phosphorylated forms are observed depending on specific combinations among the sites which can be phosphorylated. MAPK is responsible for the phosphorylation of stathmin in response to NGF. Phosphorylation at Ser-16 seems to be required for neuron polarization.

The protein resides in the cytoplasm. Its subcellular location is the cytoskeleton. In terms of biological role, involved in the regulation of the microtubule (MT) filament system by destabilizing microtubules. Prevents assembly and promotes disassembly of microtubules. Its phosphorylation at Ser-16 may be required for axon formation during neurogenesis. Involved in the control of the learned and innate fear. This is Stathmin (STMN1) from Bos taurus (Bovine).